The following is a 146-amino-acid chain: Putative esterase DR_2321 (146 aa).

It belongs to the thioesterase PaaI family.

The protein is Putative esterase DR_2321 of Deinococcus radiodurans (strain ATCC 13939 / DSM 20539 / JCM 16871 / CCUG 27074 / LMG 4051 / NBRC 15346 / NCIMB 9279 / VKM B-1422 / R1).